The primary structure comprises 317 residues: (R)-citramalyl-CoA lyase (317 aa).

In terms of domain architecture, Pyruvate carboxyltransferase spans 4 to 281 (VTIVDVAPRD…PTGIDLSALI (278 aa)). Substrate is bound at residue R12. Residues D13, H214, and H216 each contribute to the a divalent metal cation site. The active site involves C247. An a divalent metal cation-binding site is contributed by N256.

Belongs to the HMG-CoA lyase family. As to quaternary structure, homodimer. Mn(2+) serves as cofactor. It depends on Co(2+) as a cofactor. The cofactor is Ni(2+). Requires Mg(2+) as cofactor.

The enzyme catalyses (3R)-citramalyl-CoA = pyruvate + acetyl-CoA. Activated by dithioerythritol (DTE) (in vitro). Its function is as follows. Involved in the glyoxylate assimilation cycle used to regenerate acetyl-CoA and produce pyruvate as universal precursor for biosynthesis. Catalyzes the cleavage of (R)-citramalyl-CoA to yield acetyl-CoA and pyruvate. The chain is (R)-citramalyl-CoA lyase (ccl) from Chloroflexus aurantiacus (strain ATCC 29366 / DSM 635 / J-10-fl).